The sequence spans 284 residues: uncharacterized protein (284 aa).

Residues 25-123 form the AB hydrolase-1 domain; that stretch reads PILVMHGGHS…NTLTLQSAVT (99 aa). Ser-96 is a catalytic residue.

It belongs to the AB hydrolase superfamily.

This is an uncharacterized protein from Bacillus subtilis (strain 168).